A 359-amino-acid chain; its full sequence is DNA replication and repair protein RecF (359 aa).

Glycine 30–threonine 37 is a binding site for ATP.

This sequence belongs to the RecF family.

The protein localises to the cytoplasm. The RecF protein is involved in DNA metabolism; it is required for DNA replication and normal SOS inducibility. RecF binds preferentially to single-stranded, linear DNA. It also seems to bind ATP. The sequence is that of DNA replication and repair protein RecF from Flavobacterium johnsoniae (strain ATCC 17061 / DSM 2064 / JCM 8514 / BCRC 14874 / CCUG 350202 / NBRC 14942 / NCIMB 11054 / UW101) (Cytophaga johnsonae).